We begin with the raw amino-acid sequence, 302 residues long: Aspartate carbamoyltransferase catalytic subunit (302 aa).

Carbamoyl phosphate contacts are provided by R53 and T54. Residue K82 coordinates L-aspartate. The carbamoyl phosphate site is built by R103, H131, and Q134. 2 residues coordinate L-aspartate: R164 and R223. L260 and P261 together coordinate carbamoyl phosphate.

This sequence belongs to the aspartate/ornithine carbamoyltransferase superfamily. ATCase family. In terms of assembly, heterooligomer of catalytic and regulatory chains.

The enzyme catalyses carbamoyl phosphate + L-aspartate = N-carbamoyl-L-aspartate + phosphate + H(+). It participates in pyrimidine metabolism; UMP biosynthesis via de novo pathway; (S)-dihydroorotate from bicarbonate: step 2/3. In terms of biological role, catalyzes the condensation of carbamoyl phosphate and aspartate to form carbamoyl aspartate and inorganic phosphate, the committed step in the de novo pyrimidine nucleotide biosynthesis pathway. The protein is Aspartate carbamoyltransferase catalytic subunit of Methanococcus maripaludis (strain DSM 14266 / JCM 13030 / NBRC 101832 / S2 / LL).